Here is a 343-residue protein sequence, read N- to C-terminus: L-threonine 3-dehydrogenase (343 aa).

C40 lines the Zn(2+) pocket. Active-site charge relay system residues include T42 and H45. Residues H65, E66, C95, C98, C101, and C109 each contribute to the Zn(2+) site. NAD(+)-binding positions include I177, D197, R202, L264 to I266, and I288 to Y289.

It belongs to the zinc-containing alcohol dehydrogenase family. In terms of assembly, homotetramer. Zn(2+) serves as cofactor.

It is found in the cytoplasm. It catalyses the reaction L-threonine + NAD(+) = (2S)-2-amino-3-oxobutanoate + NADH + H(+). The protein operates within amino-acid degradation; L-threonine degradation via oxydo-reductase pathway; glycine from L-threonine: step 1/2. In terms of biological role, catalyzes the NAD(+)-dependent oxidation of L-threonine to 2-amino-3-ketobutyrate. The polypeptide is L-threonine 3-dehydrogenase (Aliivibrio fischeri (strain ATCC 700601 / ES114) (Vibrio fischeri)).